The primary structure comprises 161 residues: Trivalent organoarsenical cleaving enzyme (161 aa).

The region spanning 2–119 (KYAHVGLNVT…DGNEWEFFYT (118 aa)) is the VOC domain. His5 and His62 together coordinate Fe(2+). Residues Cys96 and Cys97 each coordinate roxarsone (III). Glu115 provides a ligand contact to Fe(2+).

The cofactor is Fe(2+).

The catalysed reaction is methylarsonous acid + AH2 + O2 = arsenite + methanol + A + H(+). It catalyses the reaction roxarsone (III) + AH2 + O2 = 4-hydroxy-3-nitrocyclohexa-2,5-dien-1-one + arsenite + A + H(+). The enzyme catalyses nitarsone (III) + AH2 + O2 = 4-nitrocyclohexa-2,5-dien-1-one + arsenite + A + H(+). It carries out the reaction 4-aminophenylarsonous acid + AH2 + O2 = 4-aminocyclohexa-2,5-dien-1-one + arsenite + A. Its activity is regulated as follows. Inhibited in vitro by reagents that chemically modify histidine residues (diethylpyrocarbonate (DEPC)), aspartate or glutamate residues (1-ethyl-3-(3-(dimethylamino)propyl) carbodiimide (EDC)), or cysteine residues (N-ethylmaleimide (NEM) or iodoacetamide (IAA)). Functionally, nonheme iron-dependent dioxygenase that can break carbon-arsenic bonds, playing a role in the detoxification of environmental organoarsenical compounds. Catalyzes the oxygen-dependent demethylation of highly toxic methylarsonous acid (MAs(III)) to arsenite, which can then be exported out of the cell. Can also cleave the C-As bond in several trivalent aromatic arsenicals, including roxarsone (III), nitarsone (III) and (4-aminophenyl)arsonous acid. Organoarsenical degradation by this enzyme is proposed to have a significant impact on the arsenic biogeocycle that maintains a balance between organic and inorganic species. This is Trivalent organoarsenical cleaving enzyme from Bacillus sp. (strain MD1).